A 212-amino-acid polypeptide reads, in one-letter code: ATP phosphoribosyltransferase (212 aa).

It belongs to the ATP phosphoribosyltransferase family. Short subfamily. As to quaternary structure, heteromultimer composed of HisG and HisZ subunits.

The protein localises to the cytoplasm. The enzyme catalyses 1-(5-phospho-beta-D-ribosyl)-ATP + diphosphate = 5-phospho-alpha-D-ribose 1-diphosphate + ATP. The protein operates within amino-acid biosynthesis; L-histidine biosynthesis; L-histidine from 5-phospho-alpha-D-ribose 1-diphosphate: step 1/9. Functionally, catalyzes the condensation of ATP and 5-phosphoribose 1-diphosphate to form N'-(5'-phosphoribosyl)-ATP (PR-ATP). Has a crucial role in the pathway because the rate of histidine biosynthesis seems to be controlled primarily by regulation of HisG enzymatic activity. The polypeptide is ATP phosphoribosyltransferase (Prochlorococcus marinus (strain MIT 9515)).